The chain runs to 149 residues: Cyanate hydratase (149 aa).

Residues R90, E93, and S116 contribute to the active site.

Belongs to the cyanase family.

The enzyme catalyses cyanate + hydrogencarbonate + 3 H(+) = NH4(+) + 2 CO2. Functionally, catalyzes the reaction of cyanate with bicarbonate to produce ammonia and carbon dioxide. The protein is Cyanate hydratase of Synechocystis sp. (strain ATCC 27184 / PCC 6803 / Kazusa).